Consider the following 359-residue polypeptide: Fructose-bisphosphate aldolase, cytoplasmic isozyme (359 aa).

Substrate contacts are provided by R52 and K142. E184 functions as the Proton acceptor in the catalytic mechanism. Residue K226 is the Schiff-base intermediate with dihydroxyacetone-P of the active site.

It belongs to the class I fructose-bisphosphate aldolase family.

The protein resides in the cytoplasm. It catalyses the reaction beta-D-fructose 1,6-bisphosphate = D-glyceraldehyde 3-phosphate + dihydroxyacetone phosphate. It participates in carbohydrate degradation; glycolysis; D-glyceraldehyde 3-phosphate and glycerone phosphate from D-glucose: step 4/4. The sequence is that of Fructose-bisphosphate aldolase, cytoplasmic isozyme (ALDC) from Cicer arietinum (Chickpea).